Reading from the N-terminus, the 59-residue chain is Large ribosomal subunit protein bL32 (59 aa).

Positions 1–19 are enriched in basic residues; that stretch reads MAQPKKKTSKSRRNMRRSH. Residues 1–20 are disordered; the sequence is MAQPKKKTSKSRRNMRRSHD.

Belongs to the bacterial ribosomal protein bL32 family.

This is Large ribosomal subunit protein bL32 from Maridesulfovibrio salexigens (strain ATCC 14822 / DSM 2638 / NCIMB 8403 / VKM B-1763) (Desulfovibrio salexigens).